Reading from the N-terminus, the 834-residue chain is Dual specificity calcium/calmodulin-dependent 3',5'-cyclic nucleotide phosphodiesterase 1 (834 aa).

Residues 152–338 (HSHGRDDQQQ…DELSEVQPDA (187 aa)) are disordered. A compositionally biased stretch (low complexity) spans 207-222 (THSGPTGPPSNTSSET). The span at 236–252 (TVRESVMEESPSKDPGD) shows a compositional bias: basic and acidic residues. A compositionally biased stretch (low complexity) spans 260 to 301 (STSTLTSQTTTSSSATAEPSAKAAESQAGSAGSSGSCSNPAA). A compositionally biased stretch (polar residues) spans 313 to 322 (WARSMSTNKT). Residues 364–387 (EKPKFRSVAHAIRAGIFVDRMYRR) form a calmodulin-binding region. In terms of domain architecture, PDEase spans 392–786 (ALTAFPPDVV…RIWKEQAVKD (395 aa)). His469 functions as the Proton donor in the catalytic mechanism. Positions 473, 509, 510, and 617 each coordinate Zn(2+). Asp510 serves as a coordination point for Mg(2+). Disordered regions lie at residues 720 to 744 (IVIP…AKTT) and 797 to 834 (EEAA…GAAA). Residues 732–741 (DKPRDHRTEA) show a composition bias toward basic and acidic residues. Low complexity predominate over residues 823–834 (EPAAEPADGAAA).

This sequence belongs to the cyclic nucleotide phosphodiesterase family. PDE1 subfamily. It depends on Zn(2+) as a cofactor. Mg(2+) serves as cofactor. In terms of tissue distribution, expressed in the head (at protein level). Expressed in Malpighian tubules. Expressed in neurons in the brain and ventral ganglia with male flies having higher levels of expression in the abdominal ganglia compared to female flies.

It carries out the reaction a nucleoside 3',5'-cyclic phosphate + H2O = a nucleoside 5'-phosphate + H(+). The catalysed reaction is 3',5'-cyclic GMP + H2O = GMP + H(+). The enzyme catalyses 3',5'-cyclic AMP + H2O = AMP + H(+). With respect to regulation, type I PDE are activated by the binding of calmodulin in the presence of Ca(2+). Inhibited by zaprinast and sildenafil. Cyclic nucleotide phosphodiesterase with a dual specificity for the second messengers cAMP and cGMP, which are key regulators of many important physiological processes. Required for male fertility and male mating behavior. The protein is Dual specificity calcium/calmodulin-dependent 3',5'-cyclic nucleotide phosphodiesterase 1 of Drosophila melanogaster (Fruit fly).